The sequence spans 228 residues: MFALRAAAKADKNLLPFLGQLSRSHAAKAAKAAAVANGKIVAVIGAVVDVQFDDNLPPILNALEVDNRSPRLVLEVAQHLGENTVRTIAMDGTEGLVRGQKVLDTGSPIRIPVGAETLGRIMNVIGEPIDERGPIPSAKTSPIHAEAPEFVDMSVEQEILVTGIKVVDLLAPYCKGGKIGLFGGAGVGKTVLIMELINNVAKAHGGFSVFAGVGERTREGNDLYNEMI.

Residues 1 to 31 (MFALRAAAKADKNLLPFLGQLSRSHAAKAAK) constitute a mitochondrion transit peptide. ATP is bound at residue 183-190 (GGAGVGKT).

The protein belongs to the ATPase alpha/beta chains family. In terms of assembly, F-type ATPases have 2 components, CF(1) - the catalytic core - and CF(0) - the membrane proton channel. CF(1) has five subunits: alpha(3), beta(3), gamma(1), delta(1), epsilon(1). CF(0) has three main subunits: a, b and c.

It localises to the mitochondrion. The protein localises to the mitochondrion inner membrane. The enzyme catalyses ATP + H2O + 4 H(+)(in) = ADP + phosphate + 5 H(+)(out). In terms of biological role, mitochondrial membrane ATP synthase (F(1)F(0) ATP synthase or Complex V) produces ATP from ADP in the presence of a proton gradient across the membrane which is generated by electron transport complexes of the respiratory chain. F-type ATPases consist of two structural domains, F(1) - containing the extramembraneous catalytic core, and F(0) - containing the membrane proton channel, linked together by a central stalk and a peripheral stalk. During catalysis, ATP synthesis in the catalytic domain of F(1) is coupled via a rotary mechanism of the central stalk subunits to proton translocation. Subunits alpha and beta form the catalytic core in F(1). Rotation of the central stalk against the surrounding alpha(3)beta(3) subunits leads to hydrolysis of ATP in three separate catalytic sites on the beta subunits. The polypeptide is ATP synthase subunit beta, mitochondrial (Drosophila virilis (Fruit fly)).